Here is a 549-residue protein sequence, read N- to C-terminus: Probable protein kinase UbiB (549 aa).

Positions 123–501 (NFDDTPLASA…QQKAHKSNYL (379 aa)) constitute a Protein kinase domain. ATP-binding positions include 129 to 137 (LASASISQV) and Lys-152. Catalysis depends on Asp-287, which acts as the Proton acceptor. The next 2 helical transmembrane spans lie at 498–518 (SNYL…LFSQ) and 520–540 (ATLW…LLGW).

The protein belongs to the ABC1 family. UbiB subfamily.

The protein localises to the cell inner membrane. It functions in the pathway cofactor biosynthesis; ubiquinone biosynthesis [regulation]. In terms of biological role, is probably a protein kinase regulator of UbiI activity which is involved in aerobic coenzyme Q (ubiquinone) biosynthesis. In Shewanella loihica (strain ATCC BAA-1088 / PV-4), this protein is Probable protein kinase UbiB.